Here is a 451-residue protein sequence, read N- to C-terminus: Glutamyl-tRNA reductase (451 aa).

Substrate-binding positions include 49–52 (TCNR), Ser-109, 114–116 (EQQ), and Gln-120. Cys-50 serves as the catalytic Nucleophile. NADP(+) is bound at residue 190–195 (GAGAMG).

This sequence belongs to the glutamyl-tRNA reductase family. Homodimer.

The catalysed reaction is (S)-4-amino-5-oxopentanoate + tRNA(Glu) + NADP(+) = L-glutamyl-tRNA(Glu) + NADPH + H(+). The protein operates within porphyrin-containing compound metabolism; protoporphyrin-IX biosynthesis; 5-aminolevulinate from L-glutamyl-tRNA(Glu): step 1/2. In terms of biological role, catalyzes the NADPH-dependent reduction of glutamyl-tRNA(Glu) to glutamate 1-semialdehyde (GSA). This chain is Glutamyl-tRNA reductase, found in Mycolicibacterium smegmatis (strain ATCC 700084 / mc(2)155) (Mycobacterium smegmatis).